A 310-amino-acid polypeptide reads, in one-letter code: Malate dehydrogenase (310 aa).

Residues 7-12 (GAGNVG) and Asp32 each bind NAD(+). Arg81 and Arg87 together coordinate substrate. Residues Asn94 and 117 to 119 (VSN) contribute to the NAD(+) site. Substrate is bound by residues Asn119 and Arg150. The active-site Proton acceptor is His174.

This sequence belongs to the LDH/MDH superfamily. MDH type 3 family. In terms of assembly, homotetramer; arranged as a dimer of dimers.

It carries out the reaction (S)-malate + NAD(+) = oxaloacetate + NADH + H(+). Functionally, catalyzes the reversible oxidation of malate to oxaloacetate. This chain is Malate dehydrogenase, found in Prosthecochloris vibrioformis (Chlorobium vibrioforme).